Reading from the N-terminus, the 208-residue chain is Guanylate kinase (208 aa).

Residues 4–185 (GNLYIISAPS…ALVDLEHILR (182 aa)) form the Guanylate kinase-like domain. 11-18 (APSGAGKS) is an ATP binding site.

The protein belongs to the guanylate kinase family.

The protein localises to the cytoplasm. It catalyses the reaction GMP + ATP = GDP + ADP. Essential for recycling GMP and indirectly, cGMP. The polypeptide is Guanylate kinase (Histophilus somni (strain 129Pt) (Haemophilus somnus)).